Reading from the N-terminus, the 613-residue chain is Na(+)/H(+) antiporter NhaA 1 (613 aa).

The interval 1-24 (MTEASARTIGPLPSRFSRDPKTPR) is disordered. Residues 1-408 (MTEASARTIG…DPARQDEARV (408 aa)) are na(+)/H(+) antiporter NhaA. 11 helical membrane passes run 29–49 (AAAALLLAFTVLAILWANSPW), 81–101 (GLMAFFFFIVGLEVKSEFVIG), 110–130 (AVPVVAAIAGLIVPAVIFLTF), 138–158 (QAWGVVISTDTAFLVGALAVI), 168–188 (IFLLTLAVVDDVGALGAIALF), 191–211 (DDLKLAPLAVAALLIAALAMV), 231–251 (IALYLAHVHPTLAGVAVAVLI), 300–320 (AVGPYVSFVVLPIFALANAGV), 337–357 (WGIVAGLVVGKFVGITAATAL), 377–397 (GGAALSGIGFTISLFIVDVAI), and 408–428 (VGVLIASVLAFTLSWALFRIT). Residues 409–613 (GVLIASVLAF…SLIRALEAGR (205 aa)) form the Thioredoxin domain.

The protein in the N-terminal section; belongs to the NhaA Na(+)/H(+) (TC 2.A.33) antiporter family.

The protein resides in the cell membrane. It carries out the reaction Na(+)(in) + 2 H(+)(out) = Na(+)(out) + 2 H(+)(in). Na(+)/H(+) antiporter that extrudes sodium in exchange for external protons. This Mycobacterium sp. (strain JLS) protein is Na(+)/H(+) antiporter NhaA 1.